The primary structure comprises 259 residues: ATP synthase subunit a 1 (259 aa).

5 helical membrane-spanning segments follow: residues 30–50 (TLHV…LFFF), 90–110 (LIAP…AMDL), 135–155 (DLNA…FYSL), 209–229 (LIFI…SFPW), and 230–250 (AVFH…LTIV).

Belongs to the ATPase A chain family. F-type ATPases have 2 components, CF(1) - the catalytic core - and CF(0) - the membrane proton channel. CF(1) has five subunits: alpha(3), beta(3), gamma(1), delta(1), epsilon(1). CF(0) has three main subunits: a(1), b(2) and c(9-12). The alpha and beta chains form an alternating ring which encloses part of the gamma chain. CF(1) is attached to CF(0) by a central stalk formed by the gamma and epsilon chains, while a peripheral stalk is formed by the delta and b chains.

It localises to the cell inner membrane. Its function is as follows. Key component of the proton channel; it plays a direct role in the translocation of protons across the membrane. This Methylococcus capsulatus (strain ATCC 33009 / NCIMB 11132 / Bath) protein is ATP synthase subunit a 1.